A 323-amino-acid polypeptide reads, in one-letter code: MTAVTPDGRKLLRIEARNAQVPIERKPAWIRTRARMGPQYHALKELVRREGLHTVCEEAGCPNIFECWEDREATFLIGGDTCSRNCSFCQISSGRPQPLDRDEPRRVAESVARMGLRYATVTGVTRDDLDDEGAWLYAQTVREIHHAVPGCGVELLTPDFHGRPELLDEVFSARPEVFAHNIETVPRIFKSIRPGFRYERSLDVLRAAHDAGLVTKSNLILGLGETRQEIRAALADLRSAGCDLVTITQYLRPSIRHHPVVRWVEPAEFEELAAEARELGFAGVMSGPLVRSSYRAGRLYRAAIASRTDRRTDGATTQAPQTP.

Residues Cys-56, Cys-61, Cys-67, Cys-82, Cys-86, Cys-89, and Ser-293 each contribute to the [4Fe-4S] cluster site. The Radical SAM core domain occupies 68-282; that stretch reads WEDREATFLI…AAEARELGFA (215 aa).

The protein belongs to the radical SAM superfamily. Lipoyl synthase family. Requires [4Fe-4S] cluster as cofactor.

It is found in the cytoplasm. It carries out the reaction [[Fe-S] cluster scaffold protein carrying a second [4Fe-4S](2+) cluster] + N(6)-octanoyl-L-lysyl-[protein] + 2 oxidized [2Fe-2S]-[ferredoxin] + 2 S-adenosyl-L-methionine + 4 H(+) = [[Fe-S] cluster scaffold protein] + N(6)-[(R)-dihydrolipoyl]-L-lysyl-[protein] + 4 Fe(3+) + 2 hydrogen sulfide + 2 5'-deoxyadenosine + 2 L-methionine + 2 reduced [2Fe-2S]-[ferredoxin]. It functions in the pathway protein modification; protein lipoylation via endogenous pathway; protein N(6)-(lipoyl)lysine from octanoyl-[acyl-carrier-protein]: step 2/2. In terms of biological role, catalyzes the radical-mediated insertion of two sulfur atoms into the C-6 and C-8 positions of the octanoyl moiety bound to the lipoyl domains of lipoate-dependent enzymes, thereby converting the octanoylated domains into lipoylated derivatives. This is Lipoyl synthase from Acidothermus cellulolyticus (strain ATCC 43068 / DSM 8971 / 11B).